The primary structure comprises 211 residues: tRNA (guanine-N(7)-)-methyltransferase (211 aa).

Residues Glu-44, Asp-69, Asp-96, and Asp-118 each coordinate S-adenosyl-L-methionine. The active site involves Asp-118. Substrate is bound at residue Lys-122. Positions 124 to 129 (KHEKRR) are interaction with RNA. Substrate is bound by residues Asp-154 and 191–194 (TEYE).

The protein belongs to the class I-like SAM-binding methyltransferase superfamily. TrmB family.

It catalyses the reaction guanosine(46) in tRNA + S-adenosyl-L-methionine = N(7)-methylguanosine(46) in tRNA + S-adenosyl-L-homocysteine. The protein operates within tRNA modification; N(7)-methylguanine-tRNA biosynthesis. Catalyzes the formation of N(7)-methylguanine at position 46 (m7G46) in tRNA. This is tRNA (guanine-N(7)-)-methyltransferase from Streptococcus agalactiae serotype Ia (strain ATCC 27591 / A909 / CDC SS700).